A 336-amino-acid polypeptide reads, in one-letter code: 3-isopropylmalate dehydrogenase (336 aa).

Substrate is bound by residues arginine 87, arginine 97, arginine 121, and aspartate 211. Mg(2+)-binding residues include aspartate 211, aspartate 235, and aspartate 239. 271–283 (GSAPDIAGQGIAD) lines the NAD(+) pocket.

Belongs to the isocitrate and isopropylmalate dehydrogenases family. LeuB type 2 subfamily. Homodimer. Requires Mg(2+) as cofactor. Mn(2+) is required as a cofactor.

Its subcellular location is the cytoplasm. It carries out the reaction (2R,3S)-3-isopropylmalate + NAD(+) = 4-methyl-2-oxopentanoate + CO2 + NADH. It participates in amino-acid biosynthesis; L-leucine biosynthesis; L-leucine from 3-methyl-2-oxobutanoate: step 3/4. In terms of biological role, catalyzes the oxidation of 3-carboxy-2-hydroxy-4-methylpentanoate (3-isopropylmalate) to 3-carboxy-4-methyl-2-oxopentanoate. The product decarboxylates to 4-methyl-2 oxopentanoate. The chain is 3-isopropylmalate dehydrogenase from Mycolicibacterium vanbaalenii (strain DSM 7251 / JCM 13017 / BCRC 16820 / KCTC 9966 / NRRL B-24157 / PYR-1) (Mycobacterium vanbaalenii).